Here is a 134-residue protein sequence, read N- to C-terminus: Transcription antitermination protein NusB (134 aa).

Belongs to the NusB family.

Involved in transcription antitermination. Required for transcription of ribosomal RNA (rRNA) genes. Binds specifically to the boxA antiterminator sequence of the ribosomal RNA (rrn) operons. The sequence is that of Transcription antitermination protein NusB from Shewanella sediminis (strain HAW-EB3).